Consider the following 848-residue polypeptide: Probable disease resistance protein At5g43730 (848 aa).

The stretch at 25–62 (SNYIHLMESNLDALQKTMEELKNGRDDLLARVSIEEDK) forms a coiled coil. The NB-ARC domain maps to 137–439 (VAQKIIPKAE…CEGYINPNRY (303 aa)). 179–186 (GMGGIGKT) contacts ATP. 5 LRR repeats span residues 534-555 (NLST…FFLF), 558-580 (KLVV…ISNL), 582-604 (SLQY…KKLR), 605-627 (KLIY…ATTL), and 629-649 (NLQV…IMEE).

It belongs to the disease resistance NB-LRR family.

Functionally, probable disease resistance protein. This Arabidopsis thaliana (Mouse-ear cress) protein is Probable disease resistance protein At5g43730.